We begin with the raw amino-acid sequence, 428 residues long: MIDPKLLRQDLTELKQKLAKRGYELDVDFWQQMESQRKSLQVITEDLQAKRNAGAKQVGVLKKNGEDATELLAEMQNISSEMKQAEESLKALQDKINQAALQIPNIPADDVPEGSSEEDNVEVRKWGTPRQFDFKVQEHSDLGEVLGQLDFAAAAKLTGSRFSVLKGQLAQLHRALIQFMLNTHTVKYGYTECYVPYIVNSDSLEGTGQLPKFEEDLFKLTNHTNNEAMGFYLIPTAEVPMTNLVRGERLDASELPLKFTAHTPCFRSEAGSHGRDTRGLIRQHQFEKVEMVNIATAAQSDELLEQMTGQAEYILQQLQLPYRVVKLCTGDMGFSALRTYDIEVWVPSQDTYREISSCSNCGDFQARRMGTRVKEGKKTELVHTLNGSGLAVGRTLLAIMENHQNADGSITIPEVLRPYMGGAEIISA.

Thr-236–Glu-238 is a binding site for L-serine. Arg-267–Glu-269 is a binding site for ATP. Residue Glu-290 participates in L-serine binding. Position 354 to 357 (Glu-354 to Ser-357) interacts with ATP. Ser-388 is a binding site for L-serine.

It belongs to the class-II aminoacyl-tRNA synthetase family. Type-1 seryl-tRNA synthetase subfamily. In terms of assembly, homodimer. The tRNA molecule binds across the dimer.

The protein localises to the cytoplasm. The enzyme catalyses tRNA(Ser) + L-serine + ATP = L-seryl-tRNA(Ser) + AMP + diphosphate + H(+). It catalyses the reaction tRNA(Sec) + L-serine + ATP = L-seryl-tRNA(Sec) + AMP + diphosphate + H(+). It functions in the pathway aminoacyl-tRNA biosynthesis; selenocysteinyl-tRNA(Sec) biosynthesis; L-seryl-tRNA(Sec) from L-serine and tRNA(Sec): step 1/1. Catalyzes the attachment of serine to tRNA(Ser). Is also able to aminoacylate tRNA(Sec) with serine, to form the misacylated tRNA L-seryl-tRNA(Sec), which will be further converted into selenocysteinyl-tRNA(Sec). The protein is Serine--tRNA ligase of Psychrobacter sp. (strain PRwf-1).